Reading from the N-terminus, the 236-residue chain is Uridylate kinase (236 aa).

9 to 12 is a binding site for ATP; the sequence is KISG. Gly51 serves as a coordination point for UMP. Positions 52 and 56 each coordinate ATP. UMP is bound by residues Asp71 and 132–139; that span reads TGNSHFTT. ATP contacts are provided by Tyr166 and Asp169.

The protein belongs to the UMP kinase family. Homohexamer.

It is found in the cytoplasm. It catalyses the reaction UMP + ATP = UDP + ADP. It participates in pyrimidine metabolism; CTP biosynthesis via de novo pathway; UDP from UMP (UMPK route): step 1/1. Its activity is regulated as follows. Inhibited by UTP. Its function is as follows. Catalyzes the reversible phosphorylation of UMP to UDP. The chain is Uridylate kinase from Mycoplasmoides gallisepticum (strain R(low / passage 15 / clone 2)) (Mycoplasma gallisepticum).